The sequence spans 415 residues: Protein ROH1A (415 aa).

Positions 184–219 are disordered; it reads VSGGGGGGGGGNKTTERSWSFGRRSGGSSAASKGGA. Residues 185 to 195 show a composition bias toward gly residues; the sequence is SGGGGGGGGGN. The span at 200–219 shows a compositional bias: low complexity; it reads RSWSFGRRSGGSSAASKGGA. Residues 263-283 traverse the membrane as a helical segment; the sequence is MFIMSTVMVFVMWVLTAAVPC.

Belongs to the ROH1 family. In terms of assembly, interacts with EXO70A1 and EXO70C1. Binds to EXO70C2. As to expression, mainly expressed in cells expanding in a polar manner such as pollen and root hairs.

It is found in the membrane. The protein resides in the cytoplasm. It localises to the cytosol. In terms of biological role, required for seed coat mucilage deposition. The polypeptide is Protein ROH1A (Arabidopsis thaliana (Mouse-ear cress)).